Consider the following 481-residue polypeptide: PTS system N-acetylmuramic acid-specific EIIBC component (481 aa).

One can recognise a PTS EIIB type-1 domain in the interval 1 to 89 (MAKITQTMMA…NALIESGDNV (89 aa)). Cys-28 (phosphocysteine intermediate; for EIIB activity) is an active-site residue. Residues 122-481 (SKFATIFTPL…FFGCKDVDLS (360 aa)) enclose the PTS EIIC type-1 domain. A run of 10 helical transmembrane segments spans residues 124-144 (FATIFTPLIPGFIAAGLLLGI), 165-185 (LVAYLKVFGKGLFAFLSILIG), 190-210 (QAFGGSGVNGAILASLFVLGY), 225-245 (FFGFAIDPRGNIIGVLLAAIL), 263-283 (MILTSVVTLLIMGAVTFLIIM), 307-327 (AAILAGLFLISVVFGIHQGFV), 342-362 (LFPILAMAGAGQVGASLALYA), 376-396 (GAIIPGILGIGEPLIYGVTLP), 406-426 (IGGAAGGFFIGLISYLGLPVG), and 448-468 (IFAGMAVFVGGLLISYTVGFA).

Its subcellular location is the cell inner membrane. It catalyses the reaction N-acetyl-beta-D-muramate(out) + N(pros)-phospho-L-histidyl-[protein] = N-acetyl-beta-D-muramate 6-phosphate(in) + L-histidyl-[protein]. The phosphoenolpyruvate-dependent sugar phosphotransferase system (sugar PTS), a major carbohydrate active transport system, catalyzes the phosphorylation of incoming sugar substrates concomitantly with their translocation across the cell membrane. This system is involved in N-acetylmuramic acid (MurNAc) transport, yielding cytoplasmic MurNAc-6-P. Is also able to take up anhydro-N-acetylmuramic acid (anhMurNAc), but cannot phosphorylate the carbon 6, probably because of the 1,6-anhydro ring. The chain is PTS system N-acetylmuramic acid-specific EIIBC component (murP) from Vibrio cholerae serotype O1 (strain ATCC 39315 / El Tor Inaba N16961).